The chain runs to 434 residues: Probable tRNA pseudouridine synthase D (434 aa).

The active-site Nucleophile is the D93. Positions G169–L396 constitute a TRUD domain.

It belongs to the pseudouridine synthase TruD family.

It carries out the reaction uridine(13) in tRNA = pseudouridine(13) in tRNA. Could be responsible for synthesis of pseudouridine from uracil-13 in transfer RNAs. The chain is Probable tRNA pseudouridine synthase D from Halobacterium salinarum (strain ATCC 29341 / DSM 671 / R1).